Consider the following 178-residue polypeptide: Large ribosomal subunit protein uL5 (178 aa).

It belongs to the universal ribosomal protein uL5 family. Part of the 50S ribosomal subunit; part of the 5S rRNA/L5/L18/L25 subcomplex. Contacts the 5S rRNA and the P site tRNA. Forms a bridge to the 30S subunit in the 70S ribosome.

Its function is as follows. This is one of the proteins that bind and probably mediate the attachment of the 5S RNA into the large ribosomal subunit, where it forms part of the central protuberance. In the 70S ribosome it contacts protein S13 of the 30S subunit (bridge B1b), connecting the 2 subunits; this bridge is implicated in subunit movement. Contacts the P site tRNA; the 5S rRNA and some of its associated proteins might help stabilize positioning of ribosome-bound tRNAs. The polypeptide is Large ribosomal subunit protein uL5 (Aliivibrio fischeri (strain ATCC 700601 / ES114) (Vibrio fischeri)).